The chain runs to 531 residues: Tyrosine 2,3-aminomutase (531 aa).

The active-site Proton donor/acceptor is Tyr-51. His-81 provides a ligand contact to substrate. The 5-imidazolinone (Ala-Gly) cross-link spans Ala-140–Gly-142. Ser-141 is modified (2,3-didehydroalanine (Ser)). Residues Asn-193 and Arg-298 each contribute to the substrate site.

This sequence belongs to the TAL/TAM family. Homotetramer; dimer of dimers. Post-translationally, contains an active site 4-methylidene-imidazol-5-one (MIO), which is formed autocatalytically by cyclization and dehydration of residues Ala-Ser-Gly.

The enzyme catalyses L-tyrosine = 3-amino-3-(4-hydroxyphenyl)propanoate. It carries out the reaction L-tyrosine = (E)-4-coumarate + NH4(+). In terms of biological role, has aminomutase and, to a lesser extent, ammonia-lyase activity. Primarily, catalyzes the rearrangement of L-tyrosine to R-beta-tyrosine, which is incorporated into secondary metabolites called chondramides. The aminomutase activity mainly produces R-beta-tyrosine but also S-beta tyrosine in smaller amounts. Does not accept D-tyrosine, L-histidine or L-phenylalanine as substrates. This is Tyrosine 2,3-aminomutase from Chondromyces crocatus.